A 215-amino-acid chain; its full sequence is Pyridoxine/pyridoxamine 5'-phosphate oxidase (215 aa).

Substrate-binding positions include 8-11 and Lys66; that span reads RQEY. FMN is bound by residues 61 to 66, 76 to 77, Arg82, Lys83, and Gln105; these read RIVLLK and YT. Residues Tyr123 and Arg127 each contribute to the substrate site. FMN-binding positions include 140–141 and Trp186; that span reads QS. Residue 192 to 194 coordinates substrate; that stretch reads RLH. Arg196 provides a ligand contact to FMN.

Belongs to the pyridoxamine 5'-phosphate oxidase family. Homodimer. The cofactor is FMN.

It carries out the reaction pyridoxamine 5'-phosphate + O2 + H2O = pyridoxal 5'-phosphate + H2O2 + NH4(+). It catalyses the reaction pyridoxine 5'-phosphate + O2 = pyridoxal 5'-phosphate + H2O2. It participates in cofactor metabolism; pyridoxal 5'-phosphate salvage; pyridoxal 5'-phosphate from pyridoxamine 5'-phosphate: step 1/1. It functions in the pathway cofactor metabolism; pyridoxal 5'-phosphate salvage; pyridoxal 5'-phosphate from pyridoxine 5'-phosphate: step 1/1. Its function is as follows. Catalyzes the oxidation of either pyridoxine 5'-phosphate (PNP) or pyridoxamine 5'-phosphate (PMP) into pyridoxal 5'-phosphate (PLP). This is Pyridoxine/pyridoxamine 5'-phosphate oxidase from Salinibacter ruber (strain DSM 13855 / M31).